The chain runs to 450 residues: Phosphoglucosamine mutase (450 aa).

Serine 107 acts as the Phosphoserine intermediate in catalysis. Mg(2+)-binding residues include serine 107, aspartate 246, aspartate 248, and aspartate 250. At serine 107 the chain carries Phosphoserine.

This sequence belongs to the phosphohexose mutase family. Mg(2+) is required as a cofactor. Post-translationally, activated by phosphorylation.

The catalysed reaction is alpha-D-glucosamine 1-phosphate = D-glucosamine 6-phosphate. In terms of biological role, catalyzes the conversion of glucosamine-6-phosphate to glucosamine-1-phosphate. This chain is Phosphoglucosamine mutase, found in Aromatoleum aromaticum (strain DSM 19018 / LMG 30748 / EbN1) (Azoarcus sp. (strain EbN1)).